The following is a 133-amino-acid chain: uncharacterized protein (133 aa).

Residues 82–133 (KIKSYSPSRSQKALNNPSKIRTKQTNNDTTIQQSNNTTSTNTKPSSNTNTQQ) form a disordered region. Positions 86 to 100 (YSPSRSQKALNNPSK) are enriched in polar residues. A compositionally biased stretch (low complexity) spans 105 to 133 (QTNNDTTIQQSNNTTSTNTKPSSNTNTQQ).

This is an uncharacterized protein from Acidianus convivator (ABV).